The primary structure comprises 888 residues: Isoleucine--tRNA ligase (888 aa).

The 'HIGH' region motif lies at 61–71; sequence PYANGSIHIGH. Glu-551 provides a ligand contact to L-isoleucyl-5'-AMP. A 'KMSKS' region motif is present at residues 592-596; the sequence is KMSKQ. Lys-595 provides a ligand contact to ATP. Zn(2+) contacts are provided by Cys-862, Cys-865, Cys-879, and Cys-882.

This sequence belongs to the class-I aminoacyl-tRNA synthetase family. IleS type 1 subfamily. Monomer. Requires Zn(2+) as cofactor.

It localises to the cytoplasm. The catalysed reaction is tRNA(Ile) + L-isoleucine + ATP = L-isoleucyl-tRNA(Ile) + AMP + diphosphate. Functionally, catalyzes the attachment of isoleucine to tRNA(Ile). As IleRS can inadvertently accommodate and process structurally similar amino acids such as valine, to avoid such errors it has two additional distinct tRNA(Ile)-dependent editing activities. One activity is designated as 'pretransfer' editing and involves the hydrolysis of activated Val-AMP. The other activity is designated 'posttransfer' editing and involves deacylation of mischarged Val-tRNA(Ile). The chain is Isoleucine--tRNA ligase from Mycoplasmopsis pulmonis (strain UAB CTIP) (Mycoplasma pulmonis).